The following is a 283-amino-acid chain: Non-selective voltage-gated ion channel VDAC3 (283 aa).

Cysteine 2 is subject to N-acetylcysteine. Threonine 4 carries the post-translational modification Phosphothreonine. 3 positions are modified to N6-acetyllysine: lysine 12, lysine 15, and lysine 20. Transmembrane regions (beta stranded) follow at residues 26–35 and 39–47; these read MVKIDLKTKS and VEFSTSGHA. Position 33 is a phosphothreonine (threonine 33). Lysine 53 is covalently cross-linked (Glycyl lysine isopeptide (Lys-Gly) (interchain with G-Cter in ubiquitin)). The next 3 membrane-spanning stretches (beta stranded) occupy residues 54-64, 69-76, and 80-89; these read ASGNLETKYKV, LIFTQKWN, and TLGTEISWEN. Lysine 90 bears the N6-acetyllysine mark. Residues 95-104 form a beta stranded membrane-spanning segment; the sequence is LKLTVDTIFV. Residues lysine 109 and lysine 110 each participate in a glycyl lysine isopeptide (Lys-Gly) (interchain with G-Cter in ubiquitin) cross-link. The next 10 beta stranded transmembrane spans lie at 111 to 120, 123 to 130, 137 to 145, 150 to 158, 163 to 175, 178 to 185, 189 to 198, 202 to 211, 218 to 227, and 231 to 238; these read SGKLKASYRR, FSVGSKVD, TIYGWAVLA, LAGYQMSFD, KLCQNNFALGYKA, FQLHTHVN, EFGGSIYQRV, IETSINLAWT, RFGIAAKYRL, and TSLSAKVN. The residue at position 241 (serine 241) is a Phosphoserine. NAD(+) is bound by residues 242 to 244 and 260 to 264; these read LIG and SALVD. 2 consecutive transmembrane segments (beta stranded) span residues 242 to 251 and 254 to 263; these read LIGLGYTQSL and GVKLTLSALV. The residue at position 266 (lysine 266) is an N6-acetyllysine; alternate. A Glycyl lysine isopeptide (Lys-Gly) (interchain with G-Cter in ubiquitin); alternate cross-link involves residue lysine 266. Residues 273–282 form a beta stranded membrane-spanning segment; that stretch reads HKVGLGFELE.

This sequence belongs to the eukaryotic mitochondrial porin family. Interacts with ARMC12 in a TBC1D21-dependent manner. Interacts with MISFA. Ubiquitinated by PRKN during mitophagy, leading to its degradation and enhancement of mitophagy. Deubiquitinated by USP30. Isoform 1 is widely expressed with strong expression in atrium and ascitic tumor, lower levels in brain and very low levels in liver and kidney. Isoform 2 is also widely expressed with highest levels in brain but no expression in kidney. Also expressed in flagella of epididymal sperm.

It is found in the mitochondrion outer membrane. The protein resides in the membrane. The catalysed reaction is chloride(in) = chloride(out). It catalyses the reaction K(+)(in) = K(+)(out). In terms of biological role, non-selective voltage-gated ion channel that mediates the transport of anions and cations through the mitochondrion outer membrane and plasma membrane. Forms a high-conducting channel with a stable open state and a voltage-induced closure with a mild preference for anions over cations. Involved in male fertility and sperm mitochondrial sheath formation. This Rattus norvegicus (Rat) protein is Non-selective voltage-gated ion channel VDAC3.